A 197-amino-acid polypeptide reads, in one-letter code: Probable calcium-binding protein CML21 (197 aa).

Residues 1–33 (MLRPPPPSSVLTASAAAARPPASVVQPQRQAAH) form a disordered region. The segment covering 9-30 (SVLTASAAAARPPASVVQPQRQ) has biased composition (low complexity). 3 consecutive EF-hand domains span residues 37–72 (AETL…LGAR), 126–161 (EKEA…MGLP), and 164–197 (ACMA…AAGN). Residues Asp50, Asp52, Asp54, Glu61, Asp139, Asp141, Asp143, Tyr145, Glu150, Asp177, Asp179, Asp181, Arg183, and Glu188 each coordinate Ca(2+).

In terms of biological role, potential calcium sensor. This chain is Probable calcium-binding protein CML21 (CML21), found in Oryza sativa subsp. japonica (Rice).